We begin with the raw amino-acid sequence, 571 residues long: Proline--tRNA ligase (571 aa).

This sequence belongs to the class-II aminoacyl-tRNA synthetase family. ProS type 1 subfamily. In terms of assembly, homodimer.

It localises to the cytoplasm. It carries out the reaction tRNA(Pro) + L-proline + ATP = L-prolyl-tRNA(Pro) + AMP + diphosphate. Catalyzes the attachment of proline to tRNA(Pro) in a two-step reaction: proline is first activated by ATP to form Pro-AMP and then transferred to the acceptor end of tRNA(Pro). As ProRS can inadvertently accommodate and process non-cognate amino acids such as alanine and cysteine, to avoid such errors it has two additional distinct editing activities against alanine. One activity is designated as 'pretransfer' editing and involves the tRNA(Pro)-independent hydrolysis of activated Ala-AMP. The other activity is designated 'posttransfer' editing and involves deacylation of mischarged Ala-tRNA(Pro). The misacylated Cys-tRNA(Pro) is not edited by ProRS. In Shewanella baltica (strain OS155 / ATCC BAA-1091), this protein is Proline--tRNA ligase.